The following is a 37-amino-acid chain: Delta/kappa-conotoxin Mo3964 (37 aa).

Disulfide bonds link Cys4–Cys12, Cys11–Cys27, and Cys21–Cys34.

In terms of tissue distribution, expressed by the venom duct.

Its subcellular location is the secreted. In terms of biological role, this toxin reduces the outward currents that are due to the opening of voltage-gated potassium channels in DRG neurons. In addition, leftward shift in the presence of this toxin is observed in averaged normalized conductance-voltage plot of outward sodium currents (Nav1.2/SCN2A). The protein is Delta/kappa-conotoxin Mo3964 of Conus monile (Necklace cone).